Consider the following 284-residue polypeptide: Ribosomal RNA small subunit methyltransferase A (284 aa).

S-adenosyl-L-methionine contacts are provided by His12, Leu14, Gly47, Glu68, Asp93, and Asn118.

Belongs to the class I-like SAM-binding methyltransferase superfamily. rRNA adenine N(6)-methyltransferase family. RsmA subfamily.

The protein localises to the cytoplasm. It carries out the reaction adenosine(1518)/adenosine(1519) in 16S rRNA + 4 S-adenosyl-L-methionine = N(6)-dimethyladenosine(1518)/N(6)-dimethyladenosine(1519) in 16S rRNA + 4 S-adenosyl-L-homocysteine + 4 H(+). Its function is as follows. Specifically dimethylates two adjacent adenosines (A1518 and A1519) in the loop of a conserved hairpin near the 3'-end of 16S rRNA in the 30S particle. May play a critical role in biogenesis of 30S subunits. The protein is Ribosomal RNA small subunit methyltransferase A of Synechocystis sp. (strain ATCC 27184 / PCC 6803 / Kazusa).